Reading from the N-terminus, the 1062-residue chain is Carbamoyl phosphate synthase large chain (1062 aa).

The interval 1 to 401 (MPKRTDIHKI…AMQKAVRSLE (401 aa)) is carboxyphosphate synthetic domain. Residues R129, R169, G175, G176, K208, I210, E215, G241, I242, H243, Q284, and E298 each contribute to the ATP site. The ATP-grasp 1 domain occupies 133–327 (KELCKELGEP…IAKMAAKIAI (195 aa)). Residues Q284, E298, and N300 each coordinate Mg(2+). The Mn(2+) site is built by Q284, E298, and N300. The oligomerization domain stretch occupies residues 402 to 546 (IDEKDLYSET…YSTYDGENES (145 aa)). The interval 547 to 929 (HKSGKKSVIV…ALYKAFAGAK (383 aa)) is carbamoyl phosphate synthetic domain. The region spanning 671 to 861 (DQIIKKLKLN…MAQVATRVIM (191 aa)) is the ATP-grasp 2 domain. Residues R707, D746, L748, E752, G777, V778, H779, S780, Q820, and E832 each coordinate ATP. Q820, E832, and N834 together coordinate Mg(2+). Residues Q820, E832, and N834 each contribute to the Mn(2+) site. Residues 930 to 1062 (MQLPENGNVL…NRSFATDALK (133 aa)) enclose the MGS-like domain. Positions 930–1062 (MQLPENGNVL…NRSFATDALK (133 aa)) are allosteric domain.

Belongs to the CarB family. As to quaternary structure, composed of two chains; the small (or glutamine) chain promotes the hydrolysis of glutamine to ammonia, which is used by the large (or ammonia) chain to synthesize carbamoyl phosphate. Tetramer of heterodimers (alpha,beta)4. The cofactor is Mg(2+). Mn(2+) serves as cofactor.

It carries out the reaction hydrogencarbonate + L-glutamine + 2 ATP + H2O = carbamoyl phosphate + L-glutamate + 2 ADP + phosphate + 2 H(+). The enzyme catalyses hydrogencarbonate + NH4(+) + 2 ATP = carbamoyl phosphate + 2 ADP + phosphate + 2 H(+). The protein operates within amino-acid biosynthesis; L-arginine biosynthesis; carbamoyl phosphate from bicarbonate: step 1/1. Its pathway is pyrimidine metabolism; UMP biosynthesis via de novo pathway; (S)-dihydroorotate from bicarbonate: step 1/3. In terms of biological role, large subunit of the glutamine-dependent carbamoyl phosphate synthetase (CPSase). CPSase catalyzes the formation of carbamoyl phosphate from the ammonia moiety of glutamine, carbonate, and phosphate donated by ATP, constituting the first step of 2 biosynthetic pathways, one leading to arginine and/or urea and the other to pyrimidine nucleotides. The large subunit (synthetase) binds the substrates ammonia (free or transferred from glutamine from the small subunit), hydrogencarbonate and ATP and carries out an ATP-coupled ligase reaction, activating hydrogencarbonate by forming carboxy phosphate which reacts with ammonia to form carbamoyl phosphate. This Lactobacillus johnsonii (strain CNCM I-12250 / La1 / NCC 533) protein is Carbamoyl phosphate synthase large chain.